A 275-amino-acid chain; its full sequence is UPF0328 protein ECU05_0050 (275 aa).

This sequence belongs to the UPF0328 family.

The chain is UPF0328 protein ECU05_0050 from Encephalitozoon cuniculi (strain GB-M1) (Microsporidian parasite).